The chain runs to 239 residues: Ribonuclease HII (239 aa).

The RNase H type-2 domain maps to 30–221; the sequence is GPVAGVDEVG…VRRVATRSNG (192 aa). Residues D36, E37, and D130 each coordinate a divalent metal cation. The disordered stretch occupies residues 219–239; it reads SNGAAAAEREADPPQERDGTG. Positions 225–239 are enriched in basic and acidic residues; the sequence is AEREADPPQERDGTG.

This sequence belongs to the RNase HII family. Mn(2+) serves as cofactor. It depends on Mg(2+) as a cofactor.

Its subcellular location is the cytoplasm. It catalyses the reaction Endonucleolytic cleavage to 5'-phosphomonoester.. In terms of biological role, endonuclease that specifically degrades the RNA of RNA-DNA hybrids. This chain is Ribonuclease HII, found in Mycobacterium marinum (strain ATCC BAA-535 / M).